A 601-amino-acid polypeptide reads, in one-letter code: MLQQWLRQSPGAARFLRGSCCRGPQSGSLRHSPLPTAPHRCIRSLQTSATESKEHIPLRKQLKQNAKALKAQKRQKRESEEASRQKWELTVGIEIHAQLNTETKLFSRASTSNTDTPNSNVALFDLAFPGSQPEFQATTLLPALRAAIALNCDIQPVSRFDRKHYFYHDQPAGYQITQYYAPFAKNGYVDLFPHDGIAPEDGDHVRIGIKQIQLEQDTAKSQEYPPSTQLLDFNRVSHPLIEIITMPQIHNPATAAACVRKIQAILQSCSAVTTGMELGGLRADVNVSIRRRDEAPGTHQYGGIGGLGQRTEIKNLSSFKAVEDAVIAEKNRQIAVLESGGVIEGETRGWTIGSTETRKLRGKEGEVDYRYMPDPDLPPLIISHDLVSGLRDSLPTPPDQLIEMLAGPEYGLSIEDAKPLIELDDGARLEYYQDVVDILRDLQQDQDAKSRAGLARMAGNWVLHELGGLCAKADLAWDAQRVPAETLAQIIDQLQRKRITGATAKQVLAMVFDGDRRPVPQLLEAENLLLRPLSRDEYIALAEAAISQNPQMVEQIRAKNQLGKLGWFVGQMMRMGEKGRVEAQKADEILRELILGKSDQP.

A mitochondrion-targeting transit peptide spans 1–52; it reads MLQQWLRQSPGAARFLRGSCCRGPQSGSLRHSPLPTAPHRCIRSLQTSATES.

It belongs to the GatB/GatE family. GatB subfamily. In terms of assembly, subunit of the heterotrimeric GatCAB amidotransferase (AdT) complex, composed of A, B and C subunits.

The protein resides in the mitochondrion. It carries out the reaction L-glutamyl-tRNA(Gln) + L-glutamine + ATP + H2O = L-glutaminyl-tRNA(Gln) + L-glutamate + ADP + phosphate + H(+). Allows the formation of correctly charged Gln-tRNA(Gln) through the transamidation of misacylated Glu-tRNA(Gln) in the mitochondria. The reaction takes place in the presence of glutamine and ATP through an activated gamma-phospho-Glu-tRNA(Gln). This Neosartorya fischeri (strain ATCC 1020 / DSM 3700 / CBS 544.65 / FGSC A1164 / JCM 1740 / NRRL 181 / WB 181) (Aspergillus fischerianus) protein is Glutamyl-tRNA(Gln) amidotransferase subunit B, mitochondrial.